The sequence spans 130 residues: Small ribosomal subunit protein uS9 (130 aa).

This sequence belongs to the universal ribosomal protein uS9 family.

This is Small ribosomal subunit protein uS9 from Vibrio campbellii (strain ATCC BAA-1116).